The sequence spans 532 residues: Flavin-containing monooxygenase 1 (532 aa).

A2 carries the post-translational modification N-acetylalanine. At 2–510 the chain is on the lumenal side; sequence AKRVAIVGAG…TRIVQESPTP (509 aa). Residues 9–13, E32, 40–41, and 61–62 contribute to the FAD site; these read GAGVS, LW, and NS. NADP(+)-binding positions include 60–61 and 195–198; these read SN and SGTD. The helical transmembrane segment at 511–531 threads the bilayer; it reads FASLLKLLSLLALLMAIFLIF. Residue L532 is a topological domain, cytoplasmic.

Belongs to the FMO family. FAD is required as a cofactor. In terms of tissue distribution, liver.

It is found in the endoplasmic reticulum membrane. It carries out the reaction hypotaurine + NADPH + O2 + H(+) = taurine + NADP(+) + H2O. The enzyme catalyses hypotaurine + NADH + O2 + H(+) = taurine + NAD(+) + H2O. The catalysed reaction is trimethylamine + NADPH + O2 = trimethylamine N-oxide + NADP(+) + H2O. It catalyses the reaction N,N-dimethylaniline + NADPH + O2 + H(+) = N,N-dimethylaniline N-oxide + NADP(+) + H2O. Broad spectrum monooxygenase that catalyzes the oxygenation of a wide variety of nitrogen- and sulfur-containing compounds including xenobiotics. Catalyzes the S-oxygenation of hypotaurine to produce taurine, an organic osmolyte involved in cell volume regulation as well as a variety of cytoprotective and developmental processes. In vitro, catalyzes the N-oxygenation of trimethylamine (TMA) to produce trimethylamine N-oxide (TMAO) and could therefore participate to the detoxification of this compound that is generated by the action of gut microbiota from dietary precursors such as choline, choline containing compounds, betaine or L-carnitine. In Canis lupus familiaris (Dog), this protein is Flavin-containing monooxygenase 1 (FMO1).